Reading from the N-terminus, the 653-residue chain is Beta-galactosidase-1-like protein 3 (653 aa).

Glu227 functions as the Proton donor in the catalytic mechanism. Glu301 serves as the catalytic Nucleophile.

Belongs to the glycosyl hydrolase 35 family.

In Homo sapiens (Human), this protein is Beta-galactosidase-1-like protein 3 (GLB1L3).